Consider the following 132-residue polypeptide: MDVTRLLLATLLVFLCFFAAYSHLPPEEKLRDDRSLRSNSSVNLLDLPSVSIVALNKKSKKISRKEAEKKRSSKKEASKQKVARPRTPLSVPCVSTRGSCKPPAPACCHPCASCQCRFFRSACSCRVLNVNC.

The first 22 residues, 1 to 22, serve as a signal peptide directing secretion; that stretch reads MDVTRLLLATLLVFLCFFAAYS. The N-linked (GlcNAc...) asparagine glycan is linked to Asn39. The interval 61-93 is disordered; it reads KISRKEAEKKRSSKKEASKQKVARPRTPLSVPC. The span at 64–79 shows a compositional bias: basic and acidic residues; it reads RKEAEKKRSSKKEASK. 5 disulfide bridges follow: Cys93/Cys108, Cys100/Cys114, Cys107/Cys125, Cys111/Cys132, and Cys116/Cys123. Residues 93–132 form the Agouti domain; sequence CVSTRGSCKPPAPACCHPCASCQCRFFRSACSCRVLNVNC.

The protein localises to the secreted. In terms of biological role, involved in the regulation of melanogenesis. The binding of ASP to MC1R precludes alpha-MSH initiated signaling and thus blocks production of cAMP, leading to a down-regulation of eumelanogenesis (brown/black pigment) and thus increasing synthesis of pheomelanin (yellow/red pigment). This chain is Agouti-signaling protein (ASIP), found in Callithrix geoffroyi (Geoffroy's marmoset).